The primary structure comprises 185 residues: Orotate phosphoribosyltransferase (185 aa).

5-phospho-alpha-D-ribose 1-diphosphate-binding positions include Arg99, Lys100, Lys103, and 125 to 133; that span reads EDVTTTGGS. Orotate contacts are provided by Thr129 and Arg157.

The protein belongs to the purine/pyrimidine phosphoribosyltransferase family. PyrE subfamily. In terms of assembly, homodimer. Mg(2+) is required as a cofactor.

The enzyme catalyses orotidine 5'-phosphate + diphosphate = orotate + 5-phospho-alpha-D-ribose 1-diphosphate. Its pathway is pyrimidine metabolism; UMP biosynthesis via de novo pathway; UMP from orotate: step 1/2. Catalyzes the transfer of a ribosyl phosphate group from 5-phosphoribose 1-diphosphate to orotate, leading to the formation of orotidine monophosphate (OMP). The sequence is that of Orotate phosphoribosyltransferase from Methanococcus maripaludis (strain DSM 14266 / JCM 13030 / NBRC 101832 / S2 / LL).